The sequence spans 419 residues: Glutamate dehydrogenase (419 aa).

Lys105 is a catalytic residue. An NAD(+)-binding site is contributed by 219–225 (GYGNAGY).

The protein belongs to the Glu/Leu/Phe/Val dehydrogenases family. As to quaternary structure, homohexamer.

Its subcellular location is the cytoplasm. It catalyses the reaction L-glutamate + NAD(+) + H2O = 2-oxoglutarate + NH4(+) + NADH + H(+). It carries out the reaction L-glutamate + NADP(+) + H2O = 2-oxoglutarate + NH4(+) + NADPH + H(+). This chain is Glutamate dehydrogenase (gdhA), found in Thermococcus litoralis (strain ATCC 51850 / DSM 5473 / JCM 8560 / NS-C).